The primary structure comprises 484 residues: Glutamate--tRNA ligase (484 aa).

The short motif at 11–21 is the 'HIGH' region element; sequence PSPTGYLHIGN. The 'KMSKS' region motif lies at 252–256; that stretch reads KLSKR. Lysine 255 serves as a coordination point for ATP.

Belongs to the class-I aminoacyl-tRNA synthetase family. Glutamate--tRNA ligase type 1 subfamily. Monomer.

It is found in the cytoplasm. It carries out the reaction tRNA(Glu) + L-glutamate + ATP = L-glutamyl-tRNA(Glu) + AMP + diphosphate. Functionally, catalyzes the attachment of glutamate to tRNA(Glu) in a two-step reaction: glutamate is first activated by ATP to form Glu-AMP and then transferred to the acceptor end of tRNA(Glu). This is Glutamate--tRNA ligase from Staphylococcus haemolyticus (strain JCSC1435).